The sequence spans 1274 residues: Enamelin (1274 aa).

A signal peptide spans 1–38 (MLLLQCRNPTSPPKPCGLVPNVKMSLLVFLGLLGVSAA). Over residues 103–115 (PVPNGWQQPPMPN) the composition is skewed to pro residues. Disordered regions lie at residues 103–413 (PVPN…VGAN), 476–610 (IGAN…NNPN), 668–700 (PFQS…KHFP), 712–734 (LPPL…YGSR), and 753–814 (YIKS…EEMN). Polar residues predominate over residues 117–127 (PSKTDQTQETA). Over residues 128 to 142 (KPNQTNPQEPQPQKQ) the composition is skewed to low complexity. N130 carries N-linked (GlcNAc...) asparagine glycosylation. Positions 143-158 (PLKEPPNEAARAKDDA) are enriched in basic and acidic residues. Residues 174–185 (YPQPPWPIPQRG) show a composition bias toward pro residues. S196 and S219 each carry phosphoserine. The segment covering 225 to 239 (DYEKPKEKDPPKPED) has biased composition (basic and acidic residues). Residues 249–272 (ASTNSTVPDANATQSIPEGGNDTS) are compositionally biased toward polar residues. N252, N259, and N269 each carry an N-linked (GlcNAc...) asparagine glycan. The segment covering 273-287 (PIGNTGPGPNAGNNP) has biased composition (low complexity). N300 carries an N-linked (GlcNAc...) asparagine glycan. Residues 318–330 (PNIYENYPYPNYP) are compositionally biased toward low complexity. 4 stretches are compositionally biased toward polar residues: residues 331–344 (SERQ…QGPR), 486–503 (SIGT…TNPA), 522–549 (TNPS…QASN), and 565–574 (VTVSHNMKTQ). Over residues 575–587 (NPKEKSLGQKERT) the composition is skewed to basic and acidic residues. Over residues 588–598 (VTPTKDASNPW) the composition is skewed to polar residues. Over residues 715–727 (LKEDYGRQDENLR) the composition is skewed to basic and acidic residues. A compositionally biased stretch (polar residues) spans 753-766 (YIKSNPWDKSSPST). Positions 787–801 (QYNEEDPIDPNEDES) are enriched in acidic residues. The N-linked (GlcNAc...) asparagine glycan is linked to N1066. 2 disordered regions span residues 1071 to 1097 (KLTA…PYSG) and 1109 to 1128 (SEAS…DLGG).

Phosphorylated by FAM20C in vitro. As to expression, expressed in developing teeth.

The protein localises to the secreted. It localises to the extracellular space. It is found in the extracellular matrix. Functionally, involved in the mineralization and structural organization of enamel. Involved in the extension of enamel during the secretory stage of dental enamel formation. This chain is Enamelin (Enam), found in Mus musculus (Mouse).